The following is a 58-amino-acid chain: Cecropin-B (58 aa).

The N-terminal stretch at 1–21 (ILSFVFACLLALSAVSAAPEP) is a signal peptide.

The protein belongs to the cecropin family.

The protein localises to the secreted. In terms of biological role, cecropins have lytic and antibacterial activity against several Gram-positive and Gram-negative bacteria. The polypeptide is Cecropin-B (CECB) (Spodoptera litura (Asian cotton leafworm)).